Here is a 206-residue protein sequence, read N- to C-terminus: Casparian strip membrane protein 1 (206 aa).

Ala2 bears the N-acetylalanine mark. Over 2–43 (AKESTTIDVGEPSTVTKSSSHVVKDAKKKGFVAVASRGGAKR) the chain is Cytoplasmic. Residues 44 to 64 (GLAIFDFLLRLAAIAVTIGAA) traverse the membrane as a helical segment. Topologically, residues 65 to 95 (SVMYTAEETLPFFTQFLQFQAGYDDLPAFQY) are extracellular. A helical membrane pass occupies residues 96–116 (FVIAVAVVASYLVLSLPFSIV). Topologically, residues 117 to 127 (SIVRPHAVAPR) are cytoplasmic. Residues 128-148 (LILLICDTLVVTLNTSAAAAA) traverse the membrane as a helical segment. Residues 149-180 (ASITYLAHNGNQSTNWLPICQQFGDFCQNVST) lie on the Extracellular side of the membrane. N-linked (GlcNAc...) asparagine glycans are attached at residues Asn159 and Asn177. A helical transmembrane segment spans residues 181-201 (AVVADSIAILFFIVLIIISAI). The Cytoplasmic segment spans residues 202-206 (ALKRH).

This sequence belongs to the Casparian strip membrane proteins (CASP) family. As to quaternary structure, homodimer and heterodimers with other CASP proteins. Interacts with CASP2, CASP3, CASP4 and CASP5.

It is found in the cell membrane. Regulates membrane-cell wall junctions and localized cell wall deposition. Required for establishment of the Casparian strip membrane domain (CSD) and the subsequent formation of Casparian strips, a cell wall modification of the root endodermis that determines an apoplastic barrier between the intraorganismal apoplasm and the extraorganismal apoplasm and prevents lateral diffusion. The protein is Casparian strip membrane protein 1 (CASP1) of Arabidopsis thaliana (Mouse-ear cress).